The sequence spans 262 residues: Glycoprotein gp2 (262 aa).

Positions 1–45 (RRGSPQGGSHTTPHPDRLTPSPDDTYDDDTNHPNGRNNSIEIVPQ) are disordered.

It localises to the virion membrane. Its function is as follows. Virulence factor. This Equus caballus (Horse) protein is Glycoprotein gp2.